A 62-amino-acid chain; its full sequence is Large ribosomal subunit protein eL37 (62 aa).

4 residues coordinate Zn(2+): Cys20, Cys23, Cys35, and Cys38. The segment at 20–38 (CRRCGRHAFNVAKGYCAAC) adopts a C4-type zinc-finger fold.

It belongs to the eukaryotic ribosomal protein eL37 family. Zn(2+) serves as cofactor.

Binds to the 23S rRNA. This Staphylothermus marinus (strain ATCC 43588 / DSM 3639 / JCM 9404 / F1) protein is Large ribosomal subunit protein eL37.